A 528-amino-acid chain; its full sequence is Potassium voltage-gated channel subfamily A member 3 (528 aa).

A disordered region spans residues 1–32; that stretch reads MTVVPGDHLLEPEAAGGGGGDPPQGGCGSGGG. Residues 1-187 are Cytoplasmic-facing; the sequence is MTVVPGDHLL…EYPESSGPAR (187 aa). Gly residues predominate over residues 15–32; it reads AGGGGGDPPQGGCGSGGG. The helical transmembrane segment at 188–206 threads the bilayer; sequence GIAIVSVLVILISIVIFCL. The Extracellular segment spans residues 207–247; the sequence is ETLPEFRDEKDYPASPSQDVFEAANNSTSGAPSGASSFSDP. N-linked (GlcNAc...) asparagine glycosylation is present at Asn-232. A helical transmembrane segment spans residues 248 to 269; the sequence is FFVVETLCIIWFSFELLVRFFA. Cys-270 carries S-palmitoyl cysteine lipidation. The Cytoplasmic segment spans residues 270-280; the sequence is CPSKATFSRNI. The chain crosses the membrane as a helical span at residues 281–301; the sequence is MNLIDIVAIIPYFITLGTELA. Residues 302 to 315 lie on the Extracellular side of the membrane; sequence ERQGNGQQAMSLAI. Residues 316 to 334 form a helical; Voltage-sensor membrane-spanning segment; the sequence is LRVIRLVRVFRIFKLSRHS. At 335-350 the chain is on the cytoplasmic side; sequence KGLQILGQTLKASMRE. A helical membrane pass occupies residues 351 to 370; sequence LGLLIFFLFIGVILFSSAVY. The Extracellular portion of the chain corresponds to 371–411; it reads FAEADDPSSGFNSIPDAFWWAVVTMTTVGYGDMHPVTIGGK. The short motif at 397–402 is the Selectivity filter element; that stretch reads TVGYGD. Residues 412-434 traverse the membrane as a helical segment; it reads IVGSLCAIAGVLTIALPVPVIVS. The Cytoplasmic portion of the chain corresponds to 435–528; sequence NFNYFYHRET…VNIKKIFTDV (94 aa). The interaction with KCNE4 stretch occupies residues 435–528; sequence NFNYFYHRET…VNIKKIFTDV (94 aa). Tyr-452 is modified (phosphotyrosine). At Ser-473 the chain carries Phosphoserine; by PKA. Residues 526–528 carry the PDZ-binding motif; sequence TDV.

The protein belongs to the potassium channel family. A (Shaker) (TC 1.A.1.2) subfamily. Kv1.3/KCNA3 sub-subfamily. In terms of assembly, homotetramer. Forms heterooligomers with KCNE4 which inhibits KCNA3 activity by impairing localization to the cell membrane. The stoichiometry of KCNA3 and KCNE4 in the heterooligomers are 4:1, 4:2, 4:3 or 4:4 respectively. Increasing the number of KCNE4 subunits steadily slows the activation KCNA3 and decreases its abundance at the cell membrane. However, a single subunit of KCNE4 is sufficient for the cooperative enhancement of the inactivating function of the channel. Interacts with SEC24D; this interaction is reduced in the presence of KCNE4. Interacts with DLG1, DLG2 and DLG4 via their PDZ domains. N-glycosylation promotes the cell surface expression. Post-translationally, phosphorylation on Tyr-452 inhibits its channel activity.

Its subcellular location is the cell membrane. The enzyme catalyses K(+)(in) = K(+)(out). With respect to regulation, activity is up-regulated by JAK2. Functionally, mediates the voltage-dependent potassium ion permeability of excitable membranes. Assuming opened or closed conformations in response to the voltage difference across the membrane, the protein forms a potassium-selective channel through which potassium ions may pass in accordance with their electrochemical gradient. This Mus musculus (Mouse) protein is Potassium voltage-gated channel subfamily A member 3 (Kcna3).